Reading from the N-terminus, the 611-residue chain is Methionine--tRNA ligase (611 aa).

The short motif at 12–22 is the 'HIGH' region element; sequence PYANGPRHIGH. Zn(2+) is bound by residues cysteine 144, cysteine 147, cysteine 157, and cysteine 160. A 'KMSKS' region motif is present at residues 348 to 352; that stretch reads KFSSS. Serine 351 contacts ATP.

This sequence belongs to the class-I aminoacyl-tRNA synthetase family. MetG type 1 subfamily. As to quaternary structure, monomer. Zn(2+) serves as cofactor.

It localises to the cytoplasm. The catalysed reaction is tRNA(Met) + L-methionine + ATP = L-methionyl-tRNA(Met) + AMP + diphosphate. In terms of biological role, is required not only for elongation of protein synthesis but also for the initiation of all mRNA translation through initiator tRNA(fMet) aminoacylation. In Corynebacterium urealyticum (strain ATCC 43042 / DSM 7109), this protein is Methionine--tRNA ligase.